Here is a 172-residue protein sequence, read N- to C-terminus: Small ribosomal subunit protein uS13c (172 aa).

A chloroplast-targeting transit peptide spans 1-47 (MAHTLATPVAPSVSLICNTKLSVSLSSSSLAFRPVNPKNGGGLSIKC).

Component of the chloroplast small ribosomal subunit (SSU). Mature 70S chloroplast ribosomes of higher plants consist of a small (30S) and a large (50S) subunit. The 30S small subunit contains 1 molecule of ribosomal RNA (16S rRNA) and 24 different proteins. The 50S large subunit contains 3 rRNA molecules (23S, 5S and 4.5S rRNA) and 33 different proteins. uS13c interacts with translation factor pY (PSRP1).

It localises to the plastid. It is found in the chloroplast. In terms of biological role, component of the chloroplast ribosome (chloro-ribosome), a dedicated translation machinery responsible for the synthesis of chloroplast genome-encoded proteins, including proteins of the transcription and translation machinery and components of the photosynthetic apparatus. This Spinacia oleracea (Spinach) protein is Small ribosomal subunit protein uS13c (RPS13).